The sequence spans 330 residues: Diacylglycerol acyltransferase/mycolyltransferase Ag85B (330 aa).

The first 40 residues, 1-40 (MTDLSKKVRAWGRRLLVGTAAAVTLPGLIGLAGGAPTAGA), serve as a signal peptide directing secretion. Substrate is bound at residue 82-83 (LR). The fibronectin-binding stretch occupies residues 98–108 (FEWYYQSGLSI). A disulfide bridge connects residues Cys-127 and Cys-132. Substrate is bound by residues Ser-166 and Asp-194. The active-site Nucleophile is Ser-166. Glu-270 is an active-site residue. Substrate-binding positions include 272-275 (FVRS), Lys-279, and 302-304 (HSW). His-302 is an active-site residue.

The protein belongs to the mycobacterial A85 antigen family.

Its subcellular location is the secreted. It carries out the reaction 2 alpha,alpha'-trehalose 6-mycolate = alpha,alpha'-trehalose 6,6'-bismycolate + alpha,alpha-trehalose. It catalyses the reaction an acyl-CoA + a 1,2-diacyl-sn-glycerol = a triacyl-sn-glycerol + CoA. The antigen 85 proteins (FbpA, FbpB, FbpC) are responsible for the high affinity of mycobacteria for fibronectin, a large adhesive glycoprotein, which facilitates the attachment of M.tuberculosis to murine alveolar macrophages (AMs). They also help to maintain the integrity of the cell wall by catalyzing the transfer of mycolic acids to cell wall arabinogalactan and through the synthesis of alpha,alpha-trehalose dimycolate (TDM, cord factor). They catalyze the transfer of a mycoloyl residue from one molecule of alpha,alpha-trehalose monomycolate (TMM) to another TMM, leading to the formation of TDM. The chain is Diacylglycerol acyltransferase/mycolyltransferase Ag85B (fbpB) from Mycobacterium scrofulaceum.